The chain runs to 275 residues: uncharacterized protein (275 aa).

The protein localises to the virion. This is an uncharacterized protein from Acanthamoeba polyphaga (Amoeba).